The chain runs to 287 residues: UPF0276 protein ACIAD0933 (287 aa).

Belongs to the UPF0276 family.

This chain is UPF0276 protein ACIAD0933, found in Acinetobacter baylyi (strain ATCC 33305 / BD413 / ADP1).